The primary structure comprises 514 residues: Endogenous retrovirus group PABLB member 1 Env polyprotein (514 aa).

Asn58 is a glycosylation site (N-linked (GlcNAc...) asparagine). Positions 60 to 316 (STSNVFLQWA…YPYLPHVVNQ (257 aa)) are surface protein. Positions 82 to 85 (CWVC) match the CXXC motif. N-linked (GlcNAc...) asparagine glycans are attached at residues Asn133, Asn140, Asn155, Asn218, Asn226, and Asn267. Residues 317–514 (GTRAIVHRND…QRDIFHSNAP (198 aa)) form a transmembrane protein region. A fusion peptide region spans residues 328-348 (LPTIFMPSVGLGTVIQHIEAL). Asn350 and Asn357 each carry an N-linked (GlcNAc...) asparagine glycan. The CKS-17 motif lies at 378–394 (LQNRMALDILTAAEGGT). Cys395 and Cys402 are joined by a disulfide. A CX6CC motif is present at residues 395 to 403 (CALIKTECC). N-linked (GlcNAc...) asparagine glycosylation is found at Asn408 and Asn412. Residues 452-472 (ILIVLATLWSVGIALCCGLYF) form a helical membrane-spanning segment.

The protein belongs to the gamma type-C retroviral envelope protein family. HERV class-I R(b) env subfamily. In terms of processing, the CXXC motif is highly conserved across a broad range of retroviral envelope proteins. It is thought to participate in the formation of a labile disulfide bond possibly with the CX6CC motif present in the transmembrane domain. As to expression, low expression in placenta and testis.

It localises to the cell membrane. Retroviral envelope proteins mediate receptor recognition and membrane fusion during early infection. Endogenous envelope proteins may have kept, lost or modified their original function during evolution. This endogenous envelope protein has lost its original fusogenic properties. The polypeptide is Endogenous retrovirus group PABLB member 1 Env polyprotein (ERVPABLB-1) (Homo sapiens (Human)).